The following is a 75-amino-acid chain: Alpha-elapitoxin-Bc2c (75 aa).

A signal peptide spans 1-2; that stretch reads YT. Intrachain disulfides connect cysteine 5–cysteine 24, cysteine 17–cysteine 45, cysteine 30–cysteine 34, cysteine 49–cysteine 60, and cysteine 61–cysteine 66.

The protein belongs to the three-finger toxin family. Long-chain subfamily. Type II alpha-neurotoxin sub-subfamily. In terms of assembly, monomer in solution, homodimer in crystal state. In terms of tissue distribution, expressed by the venom gland.

It localises to the secreted. In terms of biological role, binds to muscular and neuronal nicotinic acetylcholine receptor (nAChR) and inhibits acetylcholine from binding to the receptor, thereby impairing neuromuscular and neuronal transmission. Blocks muscle type nAChR. Also binds with high affinity to alpha-7/CHRNA7 nAChRs. In addition, shows a weak inhibition of neuronal alpha-3-beta-2/CHRNA3-CHRNB2 nAChR. Selectively binds to alpha-1-delta subunit interface of the mouse muscle nicotinic acetylcholine receptor, with a 10-fold higher affinity for the adult than for the fetal receptors. In vivo, when intraperitoneally injected into mice, causes flaccid paralysis and respiratory distress, followed by death within 2-4 hours. In Bungarus candidus (Malayan krait), this protein is Alpha-elapitoxin-Bc2c.